Here is a 133-residue protein sequence, read N- to C-terminus: Homeobox protein BarH-like 2 (133 aa).

Positions 1-46 (ELEKEFQKQKYLSTPDRLDLAQSLGLTQLQVKTWYQNRRMKWKKMV) form a DNA-binding region, homeobox. The disordered stretch occupies residues 45-133 (MVLKGGQEAP…VTSPEPPPSS (89 aa)).

It belongs to the BAR homeobox family. As to expression, expressed in keratinizing epithelia such as wool follicle, tongue and esophagus. Expressed at low level in thymus. Not detected in spleen, skeletal muscle, brain, heart kidney, liver and lung.

It is found in the nucleus. Transcription factor. Binds optimally to the DNA consensus sequence 5'-YYTAATGRTTTTY-3'. May control the expression of neural adhesion molecules such as L1 or Ng-CAM during embryonic development of both the central and peripherical nervous system. May be involved in controlling adhesive processes in keratinizing epithelia. This Ovis aries (Sheep) protein is Homeobox protein BarH-like 2 (BARX2).